Reading from the N-terminus, the 88-residue chain is Class II hydrophobin 1 (88 aa).

The N-terminal stretch at M1 to A15 is a signal peptide. Cystine bridges form between C19-C69, C29-C59, C30-C42, and C70-C81.

This sequence belongs to the cerato-ulmin hydrophobin family. Homodimer. Homodimers further self-assemble to form highly ordered films at water-air interfaces through intermolecular interactions.

It localises to the secreted. Its subcellular location is the cell wall. In terms of biological role, aerial growth, conidiation, and dispersal of filamentous fungi in the environment rely upon a capability of their secreting small amphipathic proteins called hydrophobins (HPBs) with low sequence identity. Class I can self-assemble into an outermost layer of rodlet bundles on aerial cell surfaces, conferring cellular hydrophobicity that supports fungal growth, development and dispersal; whereas Class II form highly ordered films at water-air interfaces through intermolecular interactions but contribute nothing to the rodlet structure. The sequence is that of Class II hydrophobin 1 from Trichoderma asperellum (strain ATCC 204424 / CBS 433.97 / NBRC 101777).